A 280-amino-acid chain; its full sequence is Energy-coupling factor transporter ATP-binding protein EcfA (280 aa).

Positions 5–240 (IDVKNLTYKY…DEMLKLTGLE (236 aa)) constitute an ABC transporter domain. 40–47 (GHNGSGKS) lines the ATP pocket.

This sequence belongs to the ABC transporter superfamily. Energy-coupling factor EcfA family. In terms of assembly, forms a stable energy-coupling factor (ECF) transporter complex composed of 2 membrane-embedded substrate-binding proteins (S component), 2 ATP-binding proteins (A component) and 2 transmembrane proteins (T component).

Its subcellular location is the cell membrane. Functionally, ATP-binding (A) component of a common energy-coupling factor (ECF) ABC-transporter complex. Unlike classic ABC transporters this ECF transporter provides the energy necessary to transport a number of different substrates. The protein is Energy-coupling factor transporter ATP-binding protein EcfA of Pediococcus pentosaceus (strain ATCC 25745 / CCUG 21536 / LMG 10740 / 183-1w).